The following is a 464-amino-acid chain: tRNA modification GTPase MnmE (464 aa).

Positions 27, 90, and 129 each coordinate (6S)-5-formyl-5,6,7,8-tetrahydrofolate. A TrmE-type G domain is found at 222–384 (GVTLVLAGSV…LYDRIRSFIA (163 aa)). GTP-binding positions include 232 to 237 (NVGKSS), 251 to 257 (SSYAGTT), and 276 to 279 (DTAG). Ser236 contacts Mg(2+). Ser251 contributes to the K(+) binding site. Residue Thr257 coordinates Mg(2+). (6S)-5-formyl-5,6,7,8-tetrahydrofolate is bound at residue Lys464.

It belongs to the TRAFAC class TrmE-Era-EngA-EngB-Septin-like GTPase superfamily. TrmE GTPase family. Homodimer. Heterotetramer of two MnmE and two MnmG subunits. K(+) is required as a cofactor.

The protein localises to the cytoplasm. Exhibits a very high intrinsic GTPase hydrolysis rate. Involved in the addition of a carboxymethylaminomethyl (cmnm) group at the wobble position (U34) of certain tRNAs, forming tRNA-cmnm(5)s(2)U34. The chain is tRNA modification GTPase MnmE from Borrelia recurrentis (strain A1).